We begin with the raw amino-acid sequence, 571 residues long: Phosphoenolpyruvate-protein phosphotransferase (571 aa).

The Tele-phosphohistidine intermediate role is filled by His-207. Residues Arg-312 and Arg-348 each coordinate phosphoenolpyruvate. Glu-435 and Asp-459 together coordinate Mg(2+). Residues 458–459 (ND) and Arg-469 contribute to the phosphoenolpyruvate site. The active-site Proton donor is the Cys-506.

This sequence belongs to the PEP-utilizing enzyme family. Homodimer. Mg(2+) is required as a cofactor.

It is found in the cytoplasm. The catalysed reaction is L-histidyl-[protein] + phosphoenolpyruvate = N(pros)-phospho-L-histidyl-[protein] + pyruvate. In terms of biological role, general (non sugar-specific) component of the phosphoenolpyruvate-dependent sugar phosphotransferase system (sugar PTS). This major carbohydrate active-transport system catalyzes the phosphorylation of incoming sugar substrates concomitantly with their translocation across the cell membrane. Enzyme I transfers the phosphoryl group from phosphoenolpyruvate (PEP) to the phosphoryl carrier protein (HPr). The sequence is that of Phosphoenolpyruvate-protein phosphotransferase (ptsI) from Chlamydia trachomatis serovar D (strain ATCC VR-885 / DSM 19411 / UW-3/Cx).